We begin with the raw amino-acid sequence, 364 residues long: Programmed cell death protein 2-like (364 aa).

At A2 the chain carries N-acetylalanine. The tract at residues E125–N150 is disordered.

In terms of biological role, over-expression suppresses AP1, CREB, NFAT, and NF-kB transcriptional activation, and delays cell cycle progression at S phase. This chain is Programmed cell death protein 2-like (Pdcd2l), found in Mus musculus (Mouse).